Consider the following 284-residue polypeptide: Ribosomal RNA small subunit methyltransferase A (284 aa).

S-adenosyl-L-methionine is bound by residues asparagine 28, leucine 30, glycine 55, glutamate 77, aspartate 103, and asparagine 123.

The protein belongs to the class I-like SAM-binding methyltransferase superfamily. rRNA adenine N(6)-methyltransferase family. RsmA subfamily.

It is found in the cytoplasm. The enzyme catalyses adenosine(1518)/adenosine(1519) in 16S rRNA + 4 S-adenosyl-L-methionine = N(6)-dimethyladenosine(1518)/N(6)-dimethyladenosine(1519) in 16S rRNA + 4 S-adenosyl-L-homocysteine + 4 H(+). Its function is as follows. Specifically dimethylates two adjacent adenosines (A1518 and A1519) in the loop of a conserved hairpin near the 3'-end of 16S rRNA in the 30S particle. May play a critical role in biogenesis of 30S subunits. This chain is Ribosomal RNA small subunit methyltransferase A, found in Bradyrhizobium diazoefficiens (strain JCM 10833 / BCRC 13528 / IAM 13628 / NBRC 14792 / USDA 110).